The chain runs to 86 residues: Putative membrane protein insertion efficiency factor (86 aa).

Residues 66 to 86 (AGGHDPVPPVPPQRYPSAQEH) are disordered.

This sequence belongs to the UPF0161 family.

It localises to the cell inner membrane. Its function is as follows. Could be involved in insertion of integral membrane proteins into the membrane. The polypeptide is Putative membrane protein insertion efficiency factor (Nitratidesulfovibrio vulgaris (strain ATCC 29579 / DSM 644 / CCUG 34227 / NCIMB 8303 / VKM B-1760 / Hildenborough) (Desulfovibrio vulgaris)).